Here is a 158-residue protein sequence, read N- to C-terminus: Superoxide dismutase [Cu-Zn] (158 aa).

Residues His-46, His-48, and His-63 each coordinate Cu cation. The cysteines at positions 57 and 149 are disulfide-linked. Zn(2+)-binding residues include His-63, His-71, His-80, and Asp-83. Cu cation is bound at residue His-120.

The protein belongs to the Cu-Zn superoxide dismutase family. Homodimer. Cu cation is required as a cofactor. It depends on Zn(2+) as a cofactor.

The protein localises to the cytoplasm. The catalysed reaction is 2 superoxide + 2 H(+) = H2O2 + O2. In terms of biological role, destroys radicals which are normally produced within the cells and which are toxic to biological systems. In Onchocerca volvulus, this protein is Superoxide dismutase [Cu-Zn] (sod-1).